Consider the following 314-residue polypeptide: MKIILANPRGFCAGVDRAISIVELALEIHGAPIYVRHEVVHNRFVVNGLRERGAIFVEELDEVPNGAIVIFSAHGVSQAVRQEAKERNLKVFDATCPLVTKVHMQVARASRKGTKAILIGHEGHPEVIGTMGQYDNDKGGIYLVEDVEDIAKLTLRNDEDITFMTQTTLSIDDTAGVIEVLKQKYPAIQGPRKNDICYATTNRQQAVRELAKLSDLVIVVGSKNSSNSNRLAELASRMGVTAKLIDDANDIEVSWLDNVTVIGLTAGASAPEILVQSVISRLKELGVDKVEELEGCEENTVFEVPKELRIKEVE.

C12 serves as a coordination point for [4Fe-4S] cluster. H41 and H74 together coordinate (2E)-4-hydroxy-3-methylbut-2-enyl diphosphate. Dimethylallyl diphosphate is bound by residues H41 and H74. H41 and H74 together coordinate isopentenyl diphosphate. C96 contributes to the [4Fe-4S] cluster binding site. A (2E)-4-hydroxy-3-methylbut-2-enyl diphosphate-binding site is contributed by H124. H124 contacts dimethylallyl diphosphate. Residue H124 participates in isopentenyl diphosphate binding. Residue E126 is the Proton donor of the active site. T167 is a (2E)-4-hydroxy-3-methylbut-2-enyl diphosphate binding site. C197 serves as a coordination point for [4Fe-4S] cluster. 4 residues coordinate (2E)-4-hydroxy-3-methylbut-2-enyl diphosphate: S225, S226, N227, and S269. S225, S226, N227, and S269 together coordinate dimethylallyl diphosphate. Residues S225, S226, N227, and S269 each contribute to the isopentenyl diphosphate site.

This sequence belongs to the IspH family. The cofactor is [4Fe-4S] cluster.

The catalysed reaction is isopentenyl diphosphate + 2 oxidized [2Fe-2S]-[ferredoxin] + H2O = (2E)-4-hydroxy-3-methylbut-2-enyl diphosphate + 2 reduced [2Fe-2S]-[ferredoxin] + 2 H(+). The enzyme catalyses dimethylallyl diphosphate + 2 oxidized [2Fe-2S]-[ferredoxin] + H2O = (2E)-4-hydroxy-3-methylbut-2-enyl diphosphate + 2 reduced [2Fe-2S]-[ferredoxin] + 2 H(+). It participates in isoprenoid biosynthesis; dimethylallyl diphosphate biosynthesis; dimethylallyl diphosphate from (2E)-4-hydroxy-3-methylbutenyl diphosphate: step 1/1. It functions in the pathway isoprenoid biosynthesis; isopentenyl diphosphate biosynthesis via DXP pathway; isopentenyl diphosphate from 1-deoxy-D-xylulose 5-phosphate: step 6/6. Functionally, catalyzes the conversion of 1-hydroxy-2-methyl-2-(E)-butenyl 4-diphosphate (HMBPP) into a mixture of isopentenyl diphosphate (IPP) and dimethylallyl diphosphate (DMAPP). Acts in the terminal step of the DOXP/MEP pathway for isoprenoid precursor biosynthesis. This is 4-hydroxy-3-methylbut-2-enyl diphosphate reductase from Histophilus somni (strain 2336) (Haemophilus somnus).